The primary structure comprises 311 residues: Mediator of RNA polymerase II transcription subunit 27 (311 aa).

The protein belongs to the Mediator complex subunit 27 family. Component of the Mediator complex.

It localises to the nucleus. Its function is as follows. Component of the Mediator complex, a coactivator involved in the regulated transcription of nearly all RNA polymerase II-dependent genes. Mediator functions as a bridge to convey information from gene-specific regulatory proteins to the basal RNA polymerase II transcription machinery. Mediator is recruited to promoters by direct interactions with regulatory proteins and serves as a scaffold for the assembly of a functional preinitiation complex with RNA polymerase II and the general transcription factors. The chain is Mediator of RNA polymerase II transcription subunit 27 (med27) from Xenopus tropicalis (Western clawed frog).